Here is a 183-residue protein sequence, read N- to C-terminus: Protein jagunal homolog 1 (183 aa).

The Cytoplasmic portion of the chain corresponds to 1–39 (MASRAGPRAAGTDGSDFQHRERVAMHYQMSVTLKYEIKK). Phosphoserine is present on Ser3. The helical transmembrane segment at 40–60 (LIYVHLVIWLLLVAKMSVGHL) threads the bilayer. Topologically, residues 61–71 (RLLSHDQVAMP) are lumenal. Residues 72-92 (YQWEYPYLLSILPSLLGLLSF) traverse the membrane as a helical segment. At 93 to 96 (PRNN) the chain is on the cytoplasmic side. Residues 97-117 (ISYLVLSMISMGLFSIAPLIY) form a helical membrane-spanning segment. Residues 118–137 (GSMEMFPAAQQLYRHGKAYR) lie on the Lumenal side of the membrane. Residues 138–158 (FLFGFSAVSIMYLVLVLAVQV) traverse the membrane as a helical segment. Over 159–183 (HAWQLYYSKKLLDSWFTSTQEKKHK) the chain is Cytoplasmic.

Belongs to the jagunal family. In terms of assembly, interacts with COPA, COPB2 and COPG2. As to expression, ubiquitously expressed.

The protein localises to the endoplasmic reticulum membrane. In terms of biological role, endoplasmic reticulum transmembrane protein involved in vesicle-mediated transport, which is required for neutrophil function. Required for vesicle-mediated transport; it is however unclear whether it is involved in early secretory pathway or intracellular protein transport. Acts as a regulator of neutrophil function, probably via its role in vesicle-mediated transport: required for defense against fungal pathogens and for granulocyte colony-stimulating factor (GM-CSF) signaling pathway; possibly by regulating glycosylation and/or targeting of proteins contributing to the viability and migration of neutrophils. The sequence is that of Protein jagunal homolog 1 from Homo sapiens (Human).